A 262-amino-acid polypeptide reads, in one-letter code: MRIDIITIFPDYFTPLDLSLIGKARRSGLIDVRLHDLRRWTYDRHHTVDDTPYGGGPGMVMKPEPWGEALDEITADADAGTPRLILPTPSGLPFTQQDAVRLAKEPWLIFACGRYEGIDARVAVDAAQRMPVEELSIGDYVLNGGEVATLVIVEAISRLLPGVLGNVESITQDSFAPGTMDNLVEGPVYTKPPVWRGHEVPPILLSGHHAAIDRWRRDEALRKTARNRPDLIRRLDPESLDKRDREVLAEVGLQETSEPVAD.

S-adenosyl-L-methionine contacts are provided by residues glycine 113 and 137–142 (IGDYVL).

The protein belongs to the RNA methyltransferase TrmD family. In terms of assembly, homodimer.

It is found in the cytoplasm. It catalyses the reaction guanosine(37) in tRNA + S-adenosyl-L-methionine = N(1)-methylguanosine(37) in tRNA + S-adenosyl-L-homocysteine + H(+). Specifically methylates guanosine-37 in various tRNAs. This chain is tRNA (guanine-N(1)-)-methyltransferase, found in Thermobifida fusca (strain YX).